The chain runs to 351 residues: Anthranilate phosphoribosyltransferase (351 aa).

5-phospho-alpha-D-ribose 1-diphosphate is bound by residues G89, 92 to 93, T97, 99 to 102, 117 to 125, and S129; these read GD, NIST, and KHGNRSASG. G89 contacts anthranilate. Residue S101 participates in Mg(2+) binding. Residue N120 participates in anthranilate binding. R175 provides a ligand contact to anthranilate. Mg(2+) is bound by residues D234 and E235.

Belongs to the anthranilate phosphoribosyltransferase family. In terms of assembly, homodimer. Mg(2+) is required as a cofactor.

It carries out the reaction N-(5-phospho-beta-D-ribosyl)anthranilate + diphosphate = 5-phospho-alpha-D-ribose 1-diphosphate + anthranilate. The protein operates within amino-acid biosynthesis; L-tryptophan biosynthesis; L-tryptophan from chorismate: step 2/5. In terms of biological role, catalyzes the transfer of the phosphoribosyl group of 5-phosphorylribose-1-pyrophosphate (PRPP) to anthranilate to yield N-(5'-phosphoribosyl)-anthranilate (PRA). The chain is Anthranilate phosphoribosyltransferase from Synechococcus sp. (strain CC9902).